The following is a 278-amino-acid chain: Type II restriction enzyme AgeI (278 aa).

Belongs to the BsaWI type II restriction endonuclease family.

It catalyses the reaction Endonucleolytic cleavage of DNA to give specific double-stranded fragments with terminal 5'-phosphates.. Functionally, a P subtype restriction enzyme that recognizes the double-stranded sequence 5'-ACCGGT-3' and cleaves after A-1. The polypeptide is Type II restriction enzyme AgeI (ageIR) (Thalassovita gelatinovora (Thalassobius gelatinovorus)).